The following is a 156-amino-acid chain: Large ribosomal subunit protein uL15 (156 aa).

Residues 1-13 (MKLNEIKDNEGAT) show a composition bias toward basic and acidic residues. Residues 1–41 (MKLNEIKDNEGATKNRKRLGRGIGSGSGKTAGRGVKGQKAR) form a disordered region. The segment covering 21-35 (RGIGSGSGKTAGRGV) has biased composition (gly residues).

Belongs to the universal ribosomal protein uL15 family. As to quaternary structure, part of the 50S ribosomal subunit.

Functionally, binds to the 23S rRNA. This is Large ribosomal subunit protein uL15 from Sinorhizobium medicae (strain WSM419) (Ensifer medicae).